Here is an 828-residue protein sequence, read N- to C-terminus: Periplasmic nitrate reductase (828 aa).

Residues 1–31 (MKLSRRSFMKANAVAAAAAAAGLSVPGVARA) constitute a signal peptide (tat-type signal). One can recognise a 4Fe-4S Mo/W bis-MGD-type domain in the interval 39 to 95 (IKWDKAPCRFCGTGCGVLVGTQQGRVVACQGDPDAPVNRGLNCIKGYFLPKIMYGKD). Cysteine 46, cysteine 49, cysteine 53, and cysteine 81 together coordinate [4Fe-4S] cluster. Mo-bis(molybdopterin guanine dinucleotide) contacts are provided by residues lysine 83, glutamine 150, asparagine 175, cysteine 179, 212 to 219 (WGANMAEM), 243 to 247 (STYQH), 262 to 264 (QSD), methionine 372, glutamine 376, asparagine 482, 508 to 509 (SD), lysine 531, aspartate 558, and 718 to 727 (TGRVLEHWHT). Phenylalanine 794 contributes to the substrate binding site. Mo-bis(molybdopterin guanine dinucleotide) is bound by residues asparagine 802 and lysine 819.

This sequence belongs to the prokaryotic molybdopterin-containing oxidoreductase family. NasA/NapA/NarB subfamily. In terms of assembly, component of the periplasmic nitrate reductase NapAB complex composed of NapA and NapB. The cofactor is [4Fe-4S] cluster. It depends on Mo-bis(molybdopterin guanine dinucleotide) as a cofactor. In terms of processing, predicted to be exported by the Tat system. The position of the signal peptide cleavage has not been experimentally proven.

It is found in the periplasm. The enzyme catalyses 2 Fe(II)-[cytochrome] + nitrate + 2 H(+) = 2 Fe(III)-[cytochrome] + nitrite + H2O. Catalytic subunit of the periplasmic nitrate reductase complex NapAB. Receives electrons from NapB and catalyzes the reduction of nitrate to nitrite. In Escherichia coli (strain K12 / MC4100 / BW2952), this protein is Periplasmic nitrate reductase.